A 615-amino-acid polypeptide reads, in one-letter code: Delta(14)-sterol reductase LBR (615 aa).

Positions 1–62 (MPSRKFADGE…DIKPLTSFRQ (62 aa)) constitute a Tudor domain. Residues 1–211 (MPSRKFADGE…IRAKDLEFGG (211 aa)) are Nuclear-facing. Residues 52–109 (NDIKPLTSFRQRKGGSTSSSPSRRRGSRSRSRSRSPGRPPKSARRSASASHQADIKEA) form a disordered region. An N6-acetyllysine modification is found at K55. T58 is modified (phosphothreonine). 2 positions are modified to phosphoserine: S59 and S67. 2 positions are modified to phosphoserine; by CDK1: S71 and S86. Basic residues predominate over residues 73-86 (SRRRGSRSRSRSRS). Residues S97 and S99 each carry the phosphoserine modification. Position 118 is a phosphothreonine (T118). S128 carries the phosphoserine modification. A Phosphothreonine modification is found at T200. 8 helical membrane-spanning segments follow: residues 212–232 (VPGVFLIMFGLPVFLFLLLLM), 258–278 (VFGVYLLWFLIQVLFYLLPIG), 299–319 (FYAFILTSAVIGTSLFQGVEF), 326–346 (FLQFALAATVFCVVLSVYLYM), 386–406 (FCELRPGLIGWVVINLVMLLA), 447–467 (IIHDGFGFMLAFGDLVWVPFI), 481–501 (EVSWPMASLIIVLKLCGYVIF), and 561–581 (PCGFNHILPYFYIIYFTMLLV). 2 positions are modified to N6-acetyllysine: K594 and K601.

It belongs to the ERG4/ERG24 family. Interacts with CBX5. Interacts with DNA. Interaction with DNA is sequence independent with higher affinity for supercoiled and relaxed circular DNA than linear DNA. Interacts with lamin B. Interacts with CLNK. Interacts with TMEM147; promoting LBR localization to the nucleus inner membrane. Post-translationally, phosphorylated by CDK1 in mitosis when the inner nuclear membrane breaks down into vesicles that dissociate from the lamina and the chromatin. It is phosphorylated by different protein kinases in interphase when the membrane is associated with these structures. Phosphorylation of LBR and HP1 proteins may be responsible for some of the alterations in chromatin organization and nuclear structure which occur at various times during the cell cycle. Phosphorylated by SRPK1. In late anaphase LBR is dephosphorylated, probably by PP1 and/or PP2A, allowing reassociation with chromatin. As to expression, expressed in the bone marrow, liver, heart, adrenal gland, lung, placenta and uterus. Expressed in osteoclasts and osteoblast-like cells.

It localises to the nucleus inner membrane. It is found in the endoplasmic reticulum membrane. The protein localises to the cytoplasm. The protein resides in the nucleus. It catalyses the reaction 5alpha-cholest-8,14-dien-3beta-ol + NADPH + H(+) = 5alpha-cholest-8-en-3beta-ol + NADP(+). It carries out the reaction 4,4-dimethyl-5alpha-cholesta-8,24-dien-3beta-ol + NADP(+) = 4,4-dimethyl-5alpha-cholesta-8,14,24-trien-3beta-ol + NADPH + H(+). The enzyme catalyses 4,4-dimethyl-8,14-cholestadien-3beta-ol + NADPH + H(+) = 4,4-dimethyl-5alpha-cholest-8-en-3beta-ol + NADP(+). It functions in the pathway steroid biosynthesis; cholesterol biosynthesis. Catalyzes the reduction of the C14-unsaturated bond of lanosterol, as part of the metabolic pathway leading to cholesterol biosynthesis. Plays a critical role in myeloid cell cholesterol biosynthesis which is essential to both myeloid cell growth and functional maturation. Mediates the activation of NADPH oxidases, perhaps by maintaining critical levels of cholesterol required for membrane lipid raft formation during neutrophil differentiation. Anchors the lamina and the heterochromatin to the inner nuclear membrane. This chain is Delta(14)-sterol reductase LBR (LBR), found in Homo sapiens (Human).